A 510-amino-acid chain; its full sequence is Laccase (510 aa).

Plastocyanin-like domains lie at P45 to K79, K99 to D174, Y242 to K317, and L372 to M506. Cu cation-binding residues include H103, H105, H151, and H153. H419, H422, H424, H491, C492, H493, H497, and M502 together coordinate Cu cation.

The protein belongs to the multicopper oxidase family. Cu(2+) serves as cofactor.

It catalyses the reaction 4 hydroquinone + O2 = 4 benzosemiquinone + 2 H2O. With respect to regulation, resistant to alkali and organic solvents such as methanol, ethanol and acetone. Resistant to EDTA, which might be explained by the spatial protection of copper ions in the active sites. Inhibited by DMSO. Strongly inhibited by Fe(2+) and DTT. In terms of biological role, multicopper oxidase that catalyzes the oxidation of a variety of substrates, including phenolic and non-phenolic compounds. Substrates include 2,6-dimethoxyphenol (2,6-DMP) and the non-phenolic compound 2,2'-azino-bis(3-ethylbenzothiazoline-6-sulfonic acid) (ABTS). Cannot use guaiacol and catechol. The chain is Laccase from Bacillus stratosphericus.